A 255-amino-acid polypeptide reads, in one-letter code: Proteasome subunit alpha (255 aa).

The segment at 228–255 (LLASPAGTSGPTGEPGPAGTAATDGGDL) is disordered. The span at 232-255 (PAGTSGPTGEPGPAGTAATDGGDL) shows a compositional bias: low complexity.

The protein belongs to the peptidase T1A family. In terms of assembly, the 20S proteasome core is composed of 14 alpha and 14 beta subunits that assemble into four stacked heptameric rings, resulting in a barrel-shaped structure. The two inner rings, each composed of seven catalytic beta subunits, are sandwiched by two outer rings, each composed of seven alpha subunits. The catalytic chamber with the active sites is on the inside of the barrel. Has a gated structure, the ends of the cylinder being occluded by the N-termini of the alpha-subunits. Is capped by the proteasome-associated ATPase, ARC.

It localises to the cytoplasm. Its pathway is protein degradation; proteasomal Pup-dependent pathway. Its activity is regulated as follows. The formation of the proteasomal ATPase ARC-20S proteasome complex, likely via the docking of the C-termini of ARC into the intersubunit pockets in the alpha-rings, may trigger opening of the gate for substrate entry. Interconversion between the open-gate and close-gate conformations leads to a dynamic regulation of the 20S proteasome proteolysis activity. Component of the proteasome core, a large protease complex with broad specificity involved in protein degradation. This Sanguibacter keddieii (strain ATCC 51767 / DSM 10542 / NCFB 3025 / ST-74) protein is Proteasome subunit alpha.